We begin with the raw amino-acid sequence, 428 residues long: 3-phosphoshikimate 1-carboxyvinyltransferase (428 aa).

Residues Lys-20, Ser-21, and Arg-25 each contribute to the 3-phosphoshikimate site. Residue Lys-20 coordinates phosphoenolpyruvate. Phosphoenolpyruvate contacts are provided by Gly-92 and Arg-120. 4 residues coordinate 3-phosphoshikimate: Ser-166, Gln-168, Asp-314, and Lys-341. Gln-168 contacts phosphoenolpyruvate. Asp-314 functions as the Proton acceptor in the catalytic mechanism. 2 residues coordinate phosphoenolpyruvate: Arg-345 and Arg-387.

Belongs to the EPSP synthase family. Monomer.

It is found in the cytoplasm. It catalyses the reaction 3-phosphoshikimate + phosphoenolpyruvate = 5-O-(1-carboxyvinyl)-3-phosphoshikimate + phosphate. The protein operates within metabolic intermediate biosynthesis; chorismate biosynthesis; chorismate from D-erythrose 4-phosphate and phosphoenolpyruvate: step 6/7. Functionally, catalyzes the transfer of the enolpyruvyl moiety of phosphoenolpyruvate (PEP) to the 5-hydroxyl of shikimate-3-phosphate (S3P) to produce enolpyruvyl shikimate-3-phosphate and inorganic phosphate. The protein is 3-phosphoshikimate 1-carboxyvinyltransferase of Listeria monocytogenes serotype 4b (strain CLIP80459).